The following is a 231-amino-acid chain: Somatolactin-2 (231 aa).

An N-terminal signal peptide occupies residues 1-24; it reads MRMMRAIKQGQWAILLWPYLLTTS. Disulfide bonds link Cys-29-Cys-39, Cys-89-Cys-205, and Cys-222-Cys-230. N-linked (GlcNAc...) asparagine glycosylation is present at Asn-145.

This sequence belongs to the somatotropin/prolactin family. In terms of tissue distribution, pituitary gland.

It localises to the secreted. The sequence is that of Somatolactin-2 from Sparus aurata (Gilthead sea bream).